Reading from the N-terminus, the 289-residue chain is tRNA (adenine(58)-N(1))-methyltransferase catalytic subunit TRMT61A (289 aa).

An N-acetylserine modification is found at Ser-2. Substrate is bound by residues 20–22 (LGH), 35–42 (QTQTRHGV), 64–65 (GW), 85–89 (QILYS), and 110–117 (SGTGSGSV). S-adenosyl-L-methionine contacts are provided by residues Leu-87, 114–116 (SGS), Glu-135, Arg-140, 163–164 (DV), and Asp-181. Residues 180–183 (LDIP) and 205–212 (SFSPCIEQ) contribute to the substrate site. The tract at residues 245-272 (LPPPDLGTGTDGPAGSDTSPFRSGTPMK) is disordered. Low complexity predominate over residues 250 to 259 (LGTGTDGPAG). Ser-263 bears the Phosphoserine mark. A substrate-binding site is contributed by Thr-278.

Belongs to the class I-like SAM-binding methyltransferase superfamily. TRM61 family. As to quaternary structure, heterotetramer; composed of two copies of TRMT6 and two copies of TRMT61A.

Its subcellular location is the nucleus. It carries out the reaction adenosine(58) in tRNA + S-adenosyl-L-methionine = N(1)-methyladenosine(58) in tRNA + S-adenosyl-L-homocysteine + H(+). It catalyses the reaction an adenosine in mRNA + S-adenosyl-L-methionine = an N(1)-methyladenosine in mRNA + S-adenosyl-L-homocysteine + H(+). Catalytic subunit of tRNA (adenine-N(1)-)-methyltransferase, which catalyzes the formation of N(1)-methyladenine at position 58 (m1A58) in initiator methionyl-tRNA. Catalytic subunit of mRNA N(1)-methyltransferase complex, which mediates methylation of adenosine residues at the N(1) position of a small subset of mRNAs: N(1) methylation takes place in tRNA T-loop-like structures of mRNAs and is only present at low stoichiometries. In Homo sapiens (Human), this protein is tRNA (adenine(58)-N(1))-methyltransferase catalytic subunit TRMT61A (TRMT61A).